A 276-amino-acid polypeptide reads, in one-letter code: ATP synthase subunit delta (276 aa).

This sequence belongs to the ATPase delta chain family. F-type ATPases have 2 components, F(1) - the catalytic core - and F(0) - the membrane proton channel. F(1) has five subunits: alpha(3), beta(3), gamma(1), delta(1), epsilon(1). F(0) has three main subunits: a(1), b(2) and c(10-14). The alpha and beta chains form an alternating ring which encloses part of the gamma chain. F(1) is attached to F(0) by a central stalk formed by the gamma and epsilon chains, while a peripheral stalk is formed by the delta and b chains.

The protein localises to the cell membrane. Functionally, f(1)F(0) ATP synthase produces ATP from ADP in the presence of a proton or sodium gradient. F-type ATPases consist of two structural domains, F(1) containing the extramembraneous catalytic core and F(0) containing the membrane proton channel, linked together by a central stalk and a peripheral stalk. During catalysis, ATP synthesis in the catalytic domain of F(1) is coupled via a rotary mechanism of the central stalk subunits to proton translocation. Its function is as follows. This protein is part of the stalk that links CF(0) to CF(1). It either transmits conformational changes from CF(0) to CF(1) or is implicated in proton conduction. The protein is ATP synthase subunit delta of Kineococcus radiotolerans (strain ATCC BAA-149 / DSM 14245 / SRS30216).